A 308-amino-acid polypeptide reads, in one-letter code: D-alanine--D-alanine ligase (308 aa).

The 200-residue stretch at Lys-103–Glu-302 folds into the ATP-grasp domain. Met-130–Thr-184 is an ATP binding site. The Mg(2+) site is built by Asp-252, Glu-269, and Asn-271.

It belongs to the D-alanine--D-alanine ligase family. Mg(2+) is required as a cofactor. The cofactor is Mn(2+).

Its subcellular location is the cytoplasm. The catalysed reaction is 2 D-alanine + ATP = D-alanyl-D-alanine + ADP + phosphate + H(+). It participates in cell wall biogenesis; peptidoglycan biosynthesis. Cell wall formation. This is D-alanine--D-alanine ligase from Afipia carboxidovorans (strain ATCC 49405 / DSM 1227 / KCTC 32145 / OM5) (Oligotropha carboxidovorans).